The sequence spans 882 residues: MTASRSPATDLPKSWDPPAAEYAIYRQWVDAGYFTANPASDKPGYSIVLPPPNVTGSLHMGHALEHTMMDALTRRKRMQGYEVLWQPGMDHAGIATQSVVEKQLAVDGKTKEDFGRELFIEKVWDWKRESGGAIGGQMRRLGDGVDWSRDRFTMDEGLSRAVRTIFKRLYDAGLIYRAERLVNWSPVLQTALSDIEVNYEEVEGELVSFRYGSLDDSGPHIVVATTRVETMLGDTAIAVHPDDERYRHLVGSSLPHPFVDRQLLIVADEHVDPEFGTGAVKVTPAHDPNDFEIGLRHQLPMISIMDTRGRIADTGTQFDGMDRFAARVAVREALAAQGRIVEEKRPYLHSVGHSERSGEPIEPRLSLQWWVRVESLAKAAGDAVRNGDTVIHPTSMEPRWFAWVDDMHDWCVSRQLWWGHRIPIWYGPNGEQRCVGPDETPPEGWEQDPDVLDTWFSSALWPFSTLGWPEKTPELEKFYPTSVLVTGYDILFFWVARMMMFGTFVGDDDAITLDGRRGPQVPFTDVFLHGLIRDESGRKMSKSKGNVIDPLDWVDMFGADALRFTLARGASPGGDLAIGEDHVRASRNFCTKLFNATRYALLNGAQLAELPPLDELTDADRWILGRLEEVRAEVDSAFDNYEFSRACESLYHFAWDEFCDWYVELAKTQLAEGITHTTAVLATTLDTLLRLLHPVIPFITEALWQALTGNESLVIADWPRSSGIDLDQVATQRITDMQKLVTEVRRFRSDQGLADRQKVPARLAGVTESDLDTQVSAVTSLAWLTDAGPDFRPSASVEVRLRGGTVVVELDTSGSIDVAAERRRLEKDLAAAHKELASTTAKLANEDFLAKAPPHVVDKIRDRQRLAQEESERINARLAVLQ.

The 'HIGH' region motif lies at 52–62 (PNVTGSLHMGH). Residues 539-543 (KMSKS) carry the 'KMSKS' region motif. Lysine 542 serves as a coordination point for ATP. Residues 816–882 (IDVAAERRRL…RINARLAVLQ (67 aa)) are a coiled coil.

This sequence belongs to the class-I aminoacyl-tRNA synthetase family. ValS type 1 subfamily. As to quaternary structure, monomer.

It localises to the cytoplasm. The catalysed reaction is tRNA(Val) + L-valine + ATP = L-valyl-tRNA(Val) + AMP + diphosphate. Its function is as follows. Catalyzes the attachment of valine to tRNA(Val). As ValRS can inadvertently accommodate and process structurally similar amino acids such as threonine, to avoid such errors, it has a 'posttransfer' editing activity that hydrolyzes mischarged Thr-tRNA(Val) in a tRNA-dependent manner. The protein is Valine--tRNA ligase of Mycolicibacterium paratuberculosis (strain ATCC BAA-968 / K-10) (Mycobacterium paratuberculosis).